A 332-amino-acid chain; its full sequence is Glycerol-3-phosphate dehydrogenase [NAD(P)+] (332 aa).

NADPH contacts are provided by serine 11, phenylalanine 12, lysine 32, and lysine 106. The sn-glycerol 3-phosphate site is built by lysine 106, glycine 137, and serine 139. Alanine 141 serves as a coordination point for NADPH. Residues lysine 192, aspartate 245, serine 255, arginine 256, and asparagine 257 each contribute to the sn-glycerol 3-phosphate site. The active-site Proton acceptor is the lysine 192. Arginine 256 contributes to the NADPH binding site. NADPH contacts are provided by valine 280 and glutamate 282.

Belongs to the NAD-dependent glycerol-3-phosphate dehydrogenase family.

Its subcellular location is the cytoplasm. The enzyme catalyses sn-glycerol 3-phosphate + NAD(+) = dihydroxyacetone phosphate + NADH + H(+). It carries out the reaction sn-glycerol 3-phosphate + NADP(+) = dihydroxyacetone phosphate + NADPH + H(+). Its pathway is membrane lipid metabolism; glycerophospholipid metabolism. Catalyzes the reduction of the glycolytic intermediate dihydroxyacetone phosphate (DHAP) to sn-glycerol 3-phosphate (G3P), the key precursor for phospholipid synthesis. The polypeptide is Glycerol-3-phosphate dehydrogenase [NAD(P)+] (Staphylococcus aureus (strain Mu3 / ATCC 700698)).